The sequence spans 500 residues: uncharacterized protein (500 aa).

The chain crosses the membrane as a helical span at residues 27-47 (IFALILIVFGFIIAPLLPGIF).

It is found in the membrane. This is an uncharacterized protein from Borreliella burgdorferi (strain ATCC 35210 / DSM 4680 / CIP 102532 / B31) (Borrelia burgdorferi).